The following is a 67-amino-acid chain: Alpha-conotoxin G1.5 (67 aa).

The N-terminal stretch at 1-21 (MGMRMMFTVFLLVALATTVVS) is a signal peptide. Positions 22 to 47 (FTSDRASDRRNAAVKAFDLISSTVKK) are excised as a propeptide. Disulfide bonds link Cys-49–Cys-55 and Cys-50–Cys-63. Gln-65 is subject to Glutamine amide.

The protein belongs to the conotoxin A superfamily. In terms of tissue distribution, expressed by the venom duct.

It is found in the secreted. Alpha-conotoxins act on postsynaptic membranes, they bind to the nicotinic acetylcholine receptors (nAChR) and thus inhibit them. Globular isomer (C1-C3; C2-C4) selectively inhibits neuronal (non-muscle) nAChR subtypes particularly human alpha-3-beta-2/CHRNA3-CHRNB2 (IC(50)=35.7 nM) and alpha-9-alpha-10/CHRNA9-CHRNA10 nAChRs (IC(50)=569 nM), while the ribbon isomer (C1-C4; C2-C3) shows weak inhibition on alpha-3-beta-2/CHRNA3-CHRNB2, but not on all other receptors tested. This is Alpha-conotoxin G1.5 from Conus geographus (Geography cone).